Reading from the N-terminus, the 483-residue chain is UDP-N-acetylmuramate--L-alanine ligase (483 aa).

112 to 118 (GTHGKTT) contacts ATP.

The protein belongs to the MurCDEF family.

The protein localises to the cytoplasm. The catalysed reaction is UDP-N-acetyl-alpha-D-muramate + L-alanine + ATP = UDP-N-acetyl-alpha-D-muramoyl-L-alanine + ADP + phosphate + H(+). Its pathway is cell wall biogenesis; peptidoglycan biosynthesis. Functionally, cell wall formation. The sequence is that of UDP-N-acetylmuramate--L-alanine ligase from Ralstonia nicotianae (strain ATCC BAA-1114 / GMI1000) (Ralstonia solanacearum).